The primary structure comprises 342 residues: Subtilisin-like serine protease Rho m 2.0101 (342 aa).

Positions 1 to 30 (TMELLEDLIEQVRQLPMVNFIEKNSLVHAN) are cleaved as a propeptide — removed in mature form. The 30-residue stretch at 1–30 (TMELLEDLIEQVRQLPMVNFIEKNSLVHAN) folds into the Inhibitor I9 domain. Residues 39-342 (PWGLARISHR…GQNLTKFWGH (304 aa)) form the Peptidase S8 domain. Catalysis depends on charge relay system residues Asp75 and His107. N-linked (GlcNAc...) asparagine glycosylation is found at Asn137 and Asn171. Residue Ser267 is the Charge relay system of the active site. Asn335 carries an N-linked (GlcNAc...) asparagine glycan.

Belongs to the peptidase S8 family.

Functionally, serine protease. This chain is Subtilisin-like serine protease Rho m 2.0101, found in Rhodotorula mucilaginosa (Yeast).